A 332-amino-acid polypeptide reads, in one-letter code: Adenosine receptor A2b (332 aa).

The Extracellular portion of the chain corresponds to 1–8; the sequence is MQLETQDA. The chain crosses the membrane as a helical span at residues 9-33; that stretch reads LYVALELAIAALSVAGNVLVCAAVG. Residues 34-43 are Cytoplasmic-facing; it reads TSSALQTPTN. Residues 44 to 67 form a helical membrane-spanning segment; it reads YFLVSLAAADVAVGLFAIPFAITI. Topologically, residues 68–78 are extracellular; it reads SLGFCTDFHSC. A disulfide bridge connects residues Cys78 and Cys170. The chain crosses the membrane as a helical span at residues 79–101; sequence LFLACFVLVLTQSSIFSLLAVAV. Over 102–121 the chain is Cytoplasmic; the sequence is DRYLAIRVPLRYKSLVTGTR. The chain crosses the membrane as a helical span at residues 122-144; the sequence is ARGVIAVLWVLAFGIGLTPFLGW. Residues 145–177 lie on the Extracellular side of the membrane; the sequence is NSKDSATNCTEPWDGTTNESCCLVKCLFENVVP. 2 N-linked (GlcNAc...) asparagine glycosylation sites follow: Asn152 and Asn162. Position 173 (Glu173) interacts with adenosine. Residues 178–202 form a helical membrane-spanning segment; it reads MSYMVYFNFFGCVLPPLLIMLVIYI. Residues 203–234 are Cytoplasmic-facing; the sequence is KIFMVACKQLQRTELVDHSRTVIQREIHAAKS. The chain crosses the membrane as a helical span at residues 235–258; the sequence is LAMIVGIFALCWLPVHAINCVTLF. Residue Asn253 coordinates adenosine. Residues 259-266 are Extracellular-facing; that stretch reads QPARAKDK. A helical membrane pass occupies residues 267–290; sequence PKWAMNMAILLSHASSVVNPIVYA. Adenosine-binding residues include Ser278 and His279. Residues 291–332 lie on the Cytoplasmic side of the membrane; the sequence is YRNRDFRYTFHKIISRYVLCQTDVLKSGNGQAGTQSALDVGL. The S-palmitoyl cysteine moiety is linked to residue Cys310.

The protein belongs to the G-protein coupled receptor 1 family.

It is found in the cell membrane. In terms of biological role, receptor for adenosine. The activity of this receptor is mediated by G proteins which activate adenylyl cyclase. In Canis lupus familiaris (Dog), this protein is Adenosine receptor A2b (ADORA2B).